The following is a 561-amino-acid chain: uncharacterized protein (561 aa).

2 helical membrane-spanning segments follow: residues 29 to 49 (FIFN…KKII) and 80 to 100 (FLFH…ASII).

The protein localises to the cell membrane. This is an uncharacterized protein from Mycoplasma genitalium (strain ATCC 33530 / DSM 19775 / NCTC 10195 / G37) (Mycoplasmoides genitalium).